The chain runs to 302 residues: Nodulation protein D 3 (302 aa).

In terms of domain architecture, HTH lysR-type spans 6-63 (LDLNLLVALDALMIERNLTAAARSINLSQPAMSAAVRRLRSYFRDELFTMRGREFVPT). Residues 23–42 (LTAAARSINLSQPAMSAAVR) constitute a DNA-binding region (H-T-H motif).

The protein belongs to the LysR transcriptional regulatory family.

Functionally, nodD regulates the expression of the nodABCFE genes which encode other nodulation proteins. NodD is also a negative regulator of its own expression. Binds flavonoids as inducers. The chain is Nodulation protein D 3 (nodD3) from Rhizobium leguminosarum bv. phaseoli.